Here is a 149-residue protein sequence, read N- to C-terminus: MADQLTEEQIAEFKEAFSLFDKDGDGSITTKELGTVMRSLGQNPTEAELQDMINEVDADGNGTIDFPEFLNLMARKMKDTDSEEELKEAFKVFDKDQNGYISAADWRHVMTNLGEKLTDEEVDEMIREADVDGDGQVNYEEFVKMMMAK.

An N-acetylalanine modification is found at A2. 4 consecutive EF-hand domains span residues 8 to 43, 44 to 79, 81 to 116, and 117 to 149; these read EQIAEFKEAFSLFDKDGDGSITTKELGTVMRSLGQN, PTEAELQDMINEVDADGNGTIDFPEFLNLMARKMKD, DSEEELKEAFKVFDKDQNGYISAADWRHVMTNLGEK, and LTDEEVDEMIREADVDGDGQVNYEEFVKMMMAK. D21, D23, D25, S27, E32, D57, D59, N61, T63, E68, D94, D96, N98, Y100, and D105 together coordinate Ca(2+). The residue at position 116 (K116) is an N6,N6,N6-trimethyllysine. The Ca(2+) site is built by D130, D132, D134, Q136, and E141.

Belongs to the calmodulin family.

Its function is as follows. Calmodulin mediates the control of a large number of enzymes, ion channels and other proteins by Ca(2+). Among the enzymes to be stimulated by the calmodulin-Ca(2+) complex are a number of protein kinases and phosphatases. The chain is Calmodulin from Mougeotia scalaris (Green alga).